Consider the following 172-residue polypeptide: 3-hydroxydecanoyl-[acyl-carrier-protein] dehydratase (172 aa).

Histidine 70 is an active-site residue.

This sequence belongs to the thioester dehydratase family. FabA subfamily. Homodimer.

The protein resides in the cytoplasm. The enzyme catalyses a (3R)-hydroxyacyl-[ACP] = a (2E)-enoyl-[ACP] + H2O. It carries out the reaction (3R)-hydroxydecanoyl-[ACP] = (2E)-decenoyl-[ACP] + H2O. The catalysed reaction is (2E)-decenoyl-[ACP] = (3Z)-decenoyl-[ACP]. The protein operates within lipid metabolism; fatty acid biosynthesis. Necessary for the introduction of cis unsaturation into fatty acids. Catalyzes the dehydration of (3R)-3-hydroxydecanoyl-ACP to E-(2)-decenoyl-ACP and then its isomerization to Z-(3)-decenoyl-ACP. Can catalyze the dehydratase reaction for beta-hydroxyacyl-ACPs with saturated chain lengths up to 16:0, being most active on intermediate chain length. This is 3-hydroxydecanoyl-[acyl-carrier-protein] dehydratase from Xylella fastidiosa (strain M23).